The primary structure comprises 383 residues: MKNICLLGATGSIGEQTLDVIKAHDDKFRLTAMTFGKNAEKAAEIIETFKPKYVGVGDEHTYETLKQHSFSYTFKTGIGEEALIEAAVIPEADIVVNALVGSVGLLPTLKAMEHKKTIALANKETLVTAGHIVKEHAQKYDVPLLPVDSEHSAIFQALQGENPKHIKRLIVTASGGSFRDRTRRELEGVTVEEALNHPNWSMGAKITIDSATMMNKGLEVIEAHWLFDLPYDQIDVLLHKESIIHSMVEFHDRSVIAQLGTPDMRVPIQYALSHPERLPFNEAKSLDLWEVGQLNFAQADFERFRCLQFAYESGKIGGTMPTVLNAANEEAVAAFLSGRISFLGIEDIIEKALERHQVIAKPSLQEIREVDKDARKFVQTLLT.

Thr-10, Gly-11, Ser-12, Ile-13, Gly-36, Lys-37, Asn-38, and Asn-122 together coordinate NADPH. Lys-123 provides a ligand contact to 1-deoxy-D-xylulose 5-phosphate. Glu-124 serves as a coordination point for NADPH. Asp-148 lines the Mn(2+) pocket. The 1-deoxy-D-xylulose 5-phosphate site is built by Ser-149, Glu-150, Ser-174, and His-197. Position 150 (Glu-150) interacts with Mn(2+). Gly-203 lines the NADPH pocket. 1-deoxy-D-xylulose 5-phosphate-binding residues include Ser-210, Asn-215, Lys-216, and Glu-219. Glu-219 lines the Mn(2+) pocket.

It belongs to the DXR family. The cofactor is Mg(2+). Mn(2+) serves as cofactor.

The catalysed reaction is 2-C-methyl-D-erythritol 4-phosphate + NADP(+) = 1-deoxy-D-xylulose 5-phosphate + NADPH + H(+). It functions in the pathway isoprenoid biosynthesis; isopentenyl diphosphate biosynthesis via DXP pathway; isopentenyl diphosphate from 1-deoxy-D-xylulose 5-phosphate: step 1/6. In terms of biological role, catalyzes the NADPH-dependent rearrangement and reduction of 1-deoxy-D-xylulose-5-phosphate (DXP) to 2-C-methyl-D-erythritol 4-phosphate (MEP). This is 1-deoxy-D-xylulose 5-phosphate reductoisomerase from Bacillus licheniformis (strain ATCC 14580 / DSM 13 / JCM 2505 / CCUG 7422 / NBRC 12200 / NCIMB 9375 / NCTC 10341 / NRRL NRS-1264 / Gibson 46).